The chain runs to 305 residues: tRNA pseudouridine synthase B (305 aa).

The active-site Nucleophile is Asp50.

The protein belongs to the pseudouridine synthase TruB family. Type 1 subfamily.

It catalyses the reaction uridine(55) in tRNA = pseudouridine(55) in tRNA. Responsible for synthesis of pseudouridine from uracil-55 in the psi GC loop of transfer RNAs. This chain is tRNA pseudouridine synthase B, found in Rhodococcus jostii (strain RHA1).